We begin with the raw amino-acid sequence, 1372 residues long: DNA-directed RNA polymerase subunit beta (1372 aa).

It belongs to the RNA polymerase beta chain family. The RNAP catalytic core consists of 2 alpha, 1 beta, 1 beta' and 1 omega subunit. When a sigma factor is associated with the core the holoenzyme is formed, which can initiate transcription.

The catalysed reaction is RNA(n) + a ribonucleoside 5'-triphosphate = RNA(n+1) + diphosphate. Its function is as follows. DNA-dependent RNA polymerase catalyzes the transcription of DNA into RNA using the four ribonucleoside triphosphates as substrates. This is DNA-directed RNA polymerase subunit beta from Rickettsia bellii (strain OSU 85-389).